The chain runs to 161 residues: Arachidonate 5-lipoxygenase-activating protein (161 aa).

Topologically, residues 1 to 8 (MDQETVGN) are lumenal. Residues 9–30 (VVLLAIVTLISVVQNGFFAHKV) traverse the membrane as a helical segment. The Cytoplasmic segment spans residues 31–52 (EHESRTQNGRSFQRTGTLAFER). A helical membrane pass occupies residues 53–77 (VYTANQNCVDAYPTFLAVLWSAGLL). Over 78-80 (CSQ) the chain is Lumenal. The helical transmembrane segment at 81-102 (VPAAFAGLMYLFVRQKYFVGYL) threads the bilayer. Topologically, residues 103 to 107 (GERTQ) are cytoplasmic. An intramembrane segment occupies 108–115 (STPGYIFG). The helical transmembrane segment at 116 to 128 (KRIILFLFLMSVA) threads the bilayer. At 129–161 (GIFNYYLIFFFGSDFENYIKTISTTISPLLLIP) the chain is on the lumenal side.

It belongs to the MAPEG family. As to quaternary structure, homotrimer. Interacts with LTC4S and ALOX5.

It localises to the nucleus membrane. It is found in the endoplasmic reticulum membrane. Required for leukotriene biosynthesis by ALOX5 (5-lipoxygenase). Anchors ALOX5 to the membrane. Binds arachidonic acid, and could play an essential role in the transfer of arachidonic acid to ALOX5. Binds to MK-886, a compound that blocks the biosynthesis of leukotrienes. The chain is Arachidonate 5-lipoxygenase-activating protein (ALOX5AP) from Homo sapiens (Human).